A 632-amino-acid chain; its full sequence is Putative golgin subfamily A member 8I (632 aa).

Residues 1 to 77 (MAEETQHNKL…SSATLKDLES (77 aa)) are disordered. The span at 38 to 50 (TNGSIPQTATSGG) shows a compositional bias: polar residues. Coiled-coil stretches lie at residues 86-154 (LDSR…HMKR) and 209-421 (KLEQ…SLMA). Positions 352–362 (KQEERIQEQHK) are enriched in basic and acidic residues. Disordered regions lie at residues 352 to 383 (KQEE…ENKS), 423 to 445 (PGEG…PMPS), 496 to 524 (LSEP…DEGE), and 550 to 569 (AHNP…ELGA). Over residues 508–520 (LGGGHHQAGAQGG) the composition is skewed to gly residues. Residues 529–632 (AADGIAAYSN…CWAWLPRRRR (104 aa)) are golgi-targeting domain. Residues 555–568 (DEPGPGAPAPQELG) are compositionally biased toward low complexity.

This sequence belongs to the GOLGA8 family.

The protein localises to the golgi apparatus. Its subcellular location is the golgi stack membrane. Functionally, may be involved in maintaining Golgi structure. In Homo sapiens (Human), this protein is Putative golgin subfamily A member 8I.